A 498-amino-acid polypeptide reads, in one-letter code: Pre-glycoprotein polyprotein GP complex (498 aa).

Gly-2 is lipidated: N-myristoyl glycine; by host. Residues 2–17 lie on the Extracellular side of the membrane; it reads GQIVTMFEALPHIIDE. The helical transmembrane segment at 18-33 threads the bilayer; that stretch reads VINIVIIVLIIITSIK. Over 34–58 the chain is Cytoplasmic; it reads AVYNFATCGILALVSFLFLAGRSCG. Cys-57 contacts Zn(2+). Topologically, residues 59–438 are extracellular; it reads MYGLNGPDIY…QGSTPLALMD (380 aa). N-linked (GlcNAc...) asparagine; by host glycosylation is found at Asn-85, Asn-95, Asn-114, Asn-124, and Asn-171. Intrachain disulfides connect Cys-92–Cys-239, Cys-123–Cys-160, Cys-184–Cys-220, Cys-285–Cys-298, Cys-307–Cys-316, and Cys-370–Cys-391. Residue Asn-232 is glycosylated (N-linked (GlcNAc...) asparagine; by host). 3 N-linked (GlcNAc...) asparagine; by host glycosylation sites follow: Asn-371, Asn-396, and Asn-401. Residues 439–459 form a helical membrane-spanning segment; it reads LLMFSTSAYLISIFLHFVRIP. At 460-498 the chain is on the cytoplasmic side; that stretch reads THRHIKGGSCPKPHRLTNKGICSCGAFKVPGVKTIWKRR. 6 residues coordinate Zn(2+): His-461, His-463, Cys-469, His-473, Cys-481, and Cys-483.

The protein belongs to the arenaviridae GPC protein family. Interacts with glycoprotein G2. Part of the GP complex (GP-C) together with glycoprotein G1 and glycoprotein G2. The GP-complex interacts with protein Z, which interacts with ribonucleocapsid; these interactions may induce virion budding. In terms of assembly, homotrimer; disulfide-linked. In pre-fusion state, G1 homotrimers bind G2 homotrimers via ionic interactions. Part of the GP complex (GP-C) together with glycoprotein G2 and the stable signal peptide. Interacts with the primary host receptor DAG1 on the cell surface. The GP-complex interacts with protein Z, which interacts with ribonucleocapsid; these interactions may induce virion budding. As to quaternary structure, homotrimer. Interacts with the stable signal peptide. In pre-fusion state, G2 homotrimers bind G1 homotrimers via ionic interactions. Part of the GP complex (GP-C) together with glycoprotein G1 and the stable signal peptide. Acidification in the endosome triggers rearrangements, which ultimately leads to a 6 helix bundle formed by the two heptad repeat domains (HR1 and HR2) in post-fusion state. The GP-complex interacts with protein Z, which interacts with ribonucleocapsid; these interactions may induce virion budding. Post-translationally, specific enzymatic cleavages in vivo yield mature proteins. GP-C polyprotein is cleaved in the endoplasmic reticulum by the host protease MBTPS1. Only cleaved glycoprotein is incorporated into virions. The SSP remains stably associated with the GP complex following cleavage by signal peptidase and plays crucial roles in the trafficking of GP through the secretory pathway. In terms of processing, myristoylation is necessary for GP2-mediated fusion activity.

Its subcellular location is the virion membrane. The protein resides in the host endoplasmic reticulum membrane. It is found in the host Golgi apparatus membrane. The protein localises to the host cell membrane. Its function is as follows. Functions as a cleaved signal peptide that is retained as the third component of the GP complex (GP-C). Helps to stabilize the spike complex in its native conformation. The SSP is required for efficient glycoprotein expression, post-translational maturation cleavage of G1 and G2, glycoprotein transport to the cell surface plasma membrane, formation of infectious virus particles, and acid pH-dependent glycoprotein-mediated cell fusion. Forms the virion spikes together with glycoprotein G2. The glycoprotein spike trimers are connected to the underlying matrix. Interacts with the host receptor. Mediates virus attachment to the host primary receptor alpha-dystroglycan DAG1 (alpha-DG) at the cell surface. Down-modulates host DAG1. Functionally, forms the virion spikes together with glycoprotein G1. The glycoprotein spike trimers are connected to the underlying matrix. Class I viral fusion protein that directs fusion of viral and host endosomal membranes, leading to delivery of the nucleocapsid into the cytoplasm. Membrane fusion is mediated by irreversible conformational changes induced by acidification. The sequence is that of Pre-glycoprotein polyprotein GP complex from Homo sapiens (Human).